The following is a 296-amino-acid chain: 5'-3' exonuclease (296 aa).

The region spanning 175–262 (VMPKALIDIK…VPLACTLKDA (88 aa)) is the 5'-3' exonuclease domain.

5'-3' exonuclease acting preferentially on double-stranded DNA. This is 5'-3' exonuclease (ypcP) from Bacillus subtilis (strain 168).